The primary structure comprises 87 residues: Omega-lycotoxin-Am1g (87 aa).

An N-terminal signal peptide occupies residues M1–C17. The propeptide occupies Q18–R40. Disulfide bonds link C44-C59, C51-C64, C58-C84, and C66-C82.

This sequence belongs to the neurotoxin omega-lctx family. Expressed by the venom gland.

It is found in the secreted. Its function is as follows. Modulates Cav2.1/CACNA1A voltage-gated calcium channels (P/Q-type currents) in rat cerebellar Purkinje cells and hippocampal CA1-CA3 neurons. At saturating concentrations (&gt;10 nM) decelerates activation kinetics and slightly increases peak amplitude without affecting deactivation kinetics. In vivo, does not cause death when intravenously injected into mice. In rat models, through its activity on Cav2.1/CACNA1A, has an ameliorative effect on memory defects provoked by hyperstimulation of N-methyl-D-aspartate receptors (NMDARs) in the hippocampus. The protein is Omega-lycotoxin-Am1g of Alopecosa marikovskyi (Wolf spider).